A 137-amino-acid polypeptide reads, in one-letter code: Phosphoribosyl-AMP cyclohydrolase (137 aa).

D84 provides a ligand contact to Mg(2+). C85 is a Zn(2+) binding site. Residues D86 and D88 each contribute to the Mg(2+) site. The Zn(2+) site is built by C101 and C108.

Belongs to the PRA-CH family. As to quaternary structure, homodimer. Mg(2+) serves as cofactor. Zn(2+) is required as a cofactor.

The protein resides in the cytoplasm. It carries out the reaction 1-(5-phospho-beta-D-ribosyl)-5'-AMP + H2O = 1-(5-phospho-beta-D-ribosyl)-5-[(5-phospho-beta-D-ribosylamino)methylideneamino]imidazole-4-carboxamide. It participates in amino-acid biosynthesis; L-histidine biosynthesis; L-histidine from 5-phospho-alpha-D-ribose 1-diphosphate: step 3/9. Catalyzes the hydrolysis of the adenine ring of phosphoribosyl-AMP. The chain is Phosphoribosyl-AMP cyclohydrolase from Chlorobaculum parvum (strain DSM 263 / NCIMB 8327) (Chlorobium vibrioforme subsp. thiosulfatophilum).